Consider the following 188-residue polypeptide: RWD domain-containing protein 4 (188 aa).

The 103-residue stretch at 9–111 folds into the RWD domain; the sequence is MELEALRSIY…EYAKDHKEQF (103 aa). The segment at 132–167 is disordered; the sequence is TPTTAPSSKKKEKKEQLSKAQKRKLADKTDHKGELP. The span at 155–166 shows a compositional bias: basic and acidic residues; sequence KLADKTDHKGEL.

In Mus musculus (Mouse), this protein is RWD domain-containing protein 4 (Rwdd4).